A 513-amino-acid polypeptide reads, in one-letter code: RNA-splicing ligase RtcB homolog (513 aa).

Residues Asp-127, Cys-130, His-235, His-267, and His-361 each contribute to the Mn(2+) site. 234–238 serves as a coordination point for GMP; that stretch reads NHYAE. GMP is bound by residues 361-362, 410-413, Ser-417, 436-439, and Lys-512; these read HN, GGTM, and HGAG. The active-site GMP-histidine intermediate is His-436.

Belongs to the RtcB family. In terms of assembly, catalytic component of the tRNA-splicing ligase complex. It depends on Mn(2+) as a cofactor.

It catalyses the reaction a 3'-end 3'-phospho-ribonucleotide-RNA + a 5'-end dephospho-ribonucleoside-RNA + GTP = a ribonucleotidyl-ribonucleotide-RNA + GMP + diphosphate. The enzyme catalyses a 3'-end 2',3'-cyclophospho-ribonucleotide-RNA + a 5'-end dephospho-ribonucleoside-RNA + GTP + H2O = a ribonucleotidyl-ribonucleotide-RNA + GMP + diphosphate + H(+). Functionally, catalytic subunit of the tRNA-splicing ligase complex that acts by directly joining spliced tRNA halves to mature-sized tRNAs by incorporating the precursor-derived splice junction phosphate into the mature tRNA as a canonical 3',5'-phosphodiester. May act as an RNA ligase with broad substrate specificity, and may function toward other RNAs. In Micromonas commoda (strain RCC299 / NOUM17 / CCMP2709) (Picoplanktonic green alga), this protein is RNA-splicing ligase RtcB homolog.